The sequence spans 2199 residues: DNA polymerase epsilon catalytic subunit A (2199 aa).

4 residues coordinate Zn(2+): C2069, C2072, C2104, and C2107. The CysA-type zinc-finger motif lies at 2069-2107 (CKQCGVHQDFDLCLHEHLWPTRDDMGTLVFSDGWSCSSC). The [4Fe-4S] cluster site is built by C2138, C2141, C2153, and C2155. The CysB motif signature appears at 2138 to 2155 (CSKCKTVKQWSLKERCSC).

This sequence belongs to the DNA polymerase type-B family. Heterotetramer. Consists of 4 subunits: pol2, dpb2, dpb3 and dpb4. Requires [4Fe-4S] cluster as cofactor.

It localises to the nucleus. It carries out the reaction DNA(n) + a 2'-deoxyribonucleoside 5'-triphosphate = DNA(n+1) + diphosphate. Its function is as follows. DNA polymerase II participates in chromosomal DNA replication. In Schizosaccharomyces pombe (strain 972 / ATCC 24843) (Fission yeast), this protein is DNA polymerase epsilon catalytic subunit A (pol2).